The sequence spans 107 residues: Thioredoxin 1 (107 aa).

The Thioredoxin domain maps to 2–107 (SAAAQVTDST…TLSQTLEKHL (106 aa)). Cys-32 and Cys-35 are disulfide-bonded.

The protein belongs to the thioredoxin family.

Participates in various redox reactions through the reversible oxidation of its active center dithiol to a disulfide and catalyzes dithiol-disulfide exchange reactions. The polypeptide is Thioredoxin 1 (trxA) (Nostoc sp. (strain PCC 7120 / SAG 25.82 / UTEX 2576)).